The sequence spans 196 residues: Recombination protein RecR (196 aa).

The C4-type zinc finger occupies 57-72 (CERCHTFTEGAVCETC). The Toprim domain occupies 80–175 (TRLCVVETPA…HVTRLARGVP (96 aa)).

The protein belongs to the RecR family.

In terms of biological role, may play a role in DNA repair. It seems to be involved in an RecBC-independent recombinational process of DNA repair. It may act with RecF and RecO. The protein is Recombination protein RecR of Acidovorax sp. (strain JS42).